Here is a 206-residue protein sequence, read N- to C-terminus: Large ribosomal subunit protein uL13x (206 aa).

Belongs to the universal ribosomal protein uL13 family.

The sequence is that of Large ribosomal subunit protein uL13x (RPL13AC) from Arabidopsis thaliana (Mouse-ear cress).